The primary structure comprises 310 residues: Upstream stimulatory factor 1 (310 aa).

The segment covering Met-1 to Ile-17 has biased composition (polar residues). Disordered stretches follow at residues Met-1–Glu-26 and Gln-171–Arg-209. Residues Glu-190–Arg-209 show a composition bias toward basic and acidic residues. Residues Lys-199–Leu-254 enclose the bHLH domain. A leucine-zipper region spans residues Leu-271–Leu-292. Lys-306 is covalently cross-linked (Glycyl lysine isopeptide (Lys-Gly) (interchain with G-Cter in SUMO2)).

In terms of assembly, efficient DNA binding requires dimerization with another bHLH protein. Binds DNA as a homodimer or a heterodimer (USF1/USF2). Interacts with varicella-zoster virus IE62 protein.

The protein localises to the nucleus. In terms of biological role, transcription factor that binds to a symmetrical DNA sequence (E-boxes) (5'-CACGTG-3') that is found in a variety of viral and cellular promoters. The chain is Upstream stimulatory factor 1 (USF1) from Homo sapiens (Human).